Consider the following 300-residue polypeptide: Arrestin domain-containing protein 4 (300 aa).

2 consecutive short sequence motifs (PPxY motif) follow at residues 231 to 234 (PPNY) and 276 to 279 (PPLY).

It belongs to the arrestin family. In terms of assembly, interacts with ADRB2. Interacts (via PPxY motifs) with ITCH, NEDD4L and WWP2. Interacts with AVPR2. Identified in a complex containing at least ARRDC4, AVPR2 and HGS. Interacts with SLC11A2; controls the incorporation of SLC11A2 into extracellular vesicles through an ubiquitination-dependent mechanism. Interacts with TRIM65.

Its subcellular location is the early endosome. It localises to the cell membrane. The protein resides in the cytoplasmic vesicle. Functions as an adapter recruiting ubiquitin-protein ligases to their specific substrates. Plays a role in endocytosis of activated G protein-coupled receptors (GPCRs) Through an ubiquitination-dependent mechanism also plays a role in the incorporation of SLC11A2 into extracellular vesicles. May play a role in glucose uptake. Participates in innate immune response by promoting IFIH1/MDA5 activation through interaction with TRIM65. This Rattus norvegicus (Rat) protein is Arrestin domain-containing protein 4 (Arrdc4).